Here is a 330-residue protein sequence, read N- to C-terminus: Ketol-acid reductoisomerase (NADP(+)) (330 aa).

The KARI N-terminal Rossmann domain occupies 1–181; sequence MNAYYEQDAD…GGTKAGVIET (181 aa). NADP(+) is bound by residues 24–27, Arg-47, Ser-50, Ser-52, and 82–85; these read FGSQ and DQYQ. The active site involves His-107. Position 133 (Gly-133) interacts with NADP(+). One can recognise a KARI C-terminal knotted domain in the interval 182–327; it reads TFKNETETDL…AKLRDMMSWL (146 aa). The Mg(2+) site is built by Asp-190, Glu-194, Glu-226, and Glu-230. Ser-251 is a binding site for substrate.

The protein belongs to the ketol-acid reductoisomerase family. Requires Mg(2+) as cofactor.

It catalyses the reaction (2R)-2,3-dihydroxy-3-methylbutanoate + NADP(+) = (2S)-2-acetolactate + NADPH + H(+). The catalysed reaction is (2R,3R)-2,3-dihydroxy-3-methylpentanoate + NADP(+) = (S)-2-ethyl-2-hydroxy-3-oxobutanoate + NADPH + H(+). It functions in the pathway amino-acid biosynthesis; L-isoleucine biosynthesis; L-isoleucine from 2-oxobutanoate: step 2/4. The protein operates within amino-acid biosynthesis; L-valine biosynthesis; L-valine from pyruvate: step 2/4. Involved in the biosynthesis of branched-chain amino acids (BCAA). Catalyzes an alkyl-migration followed by a ketol-acid reduction of (S)-2-acetolactate (S2AL) to yield (R)-2,3-dihydroxy-isovalerate. In the isomerase reaction, S2AL is rearranged via a Mg-dependent methyl migration to produce 3-hydroxy-3-methyl-2-ketobutyrate (HMKB). In the reductase reaction, this 2-ketoacid undergoes a metal-dependent reduction by NADPH to yield (R)-2,3-dihydroxy-isovalerate. This chain is Ketol-acid reductoisomerase (NADP(+)), found in Chlorobium phaeobacteroides (strain BS1).